We begin with the raw amino-acid sequence, 127 residues long: Thioredoxin domain-containing protein 8 (127 aa).

Residues 1–92 (MVQIIKDTNE…SQKVTLFSRI (92 aa)) enclose the Thioredoxin domain. Cysteines 32 and 35 form a disulfide.

The protein belongs to the thioredoxin family. As to expression, testis-specific. Only expressed during spermiogenesis, prominently in the Golgi apparatus of pachytene spermatocytes and round and elongated spermatids, with a transient localization in the developing acrosome of round spermatids (at protein level).

Its subcellular location is the cytoplasm. The protein localises to the golgi apparatus. Functionally, may be required for post-translational modifications of proteins required for acrosomal biogenesis. May act by reducing disulfide bonds within the sperm. This chain is Thioredoxin domain-containing protein 8 (TXNDC8), found in Homo sapiens (Human).